The following is a 162-amino-acid chain: Caveolin-2 (162 aa).

Topologically, residues 1–86 are cytoplasmic; it reads MGLETEKADV…FEISKYVIYK (86 aa). Phosphotyrosine; by SRC is present on Tyr19. Phosphoserine occurs at positions 20 and 23. Tyr27 carries the post-translational modification Phosphotyrosine; by SRC. A Phosphoserine modification is found at Ser36. An intramembrane region (helical) is located at residues 87–107; it reads FLTFFLAIPMAFAAGILFAIL. Over 108–162 the chain is Cytoplasmic; that stretch reads SCLHIWIIMPFVKTCLMVLPSVQTIWKTITDVVIAPLCTSVGRSFSSISLQLSHD.

It belongs to the caveolin family. Monomer or homodimer. Interacts with CAV1; the interaction forms a stable heterooligomeric complex that is required for targeting to lipid rafts and for caveolae formation. Tyrosine phosphorylated forms do not form heterooligomers with the Tyr-19-phosphorylated form existing as a monomer or dimer, and the Tyr-27-form as a monomer only. Interacts (tyrosine phosphorylated form) with the SH2 domain-containing proteins, RASA1, NCK1 and SRC. Interacts (tyrosine phosphorylated form) with INSR, the interaction (Tyr-27-phosphorylated form) is increased on insulin stimulation. Interacts (Tyr-19 phosphorylated form) with MAPK1 (phosphorylated form); the interaction, promoted by insulin, leads to nuclear location and MAPK1 activation. Interacts with STAT3; the interaction is increased on insulin-induced tyrosine phosphorylation leading to STAT activation. Post-translationally, phosphorylated on serine and tyrosine residues. CAV1 promotes phosphorylation on Ser-23 which then targets the complex to the plasma membrane, lipid rafts and caveolae. Phosphorylation on Ser-36 appears to modulate mitosis in endothelial cells. Phosphorylation on both Tyr-19 and Tyr-27 is required for insulin-induced 'Ser-727' phosphorylation of STAT3 and its activation. Phosphorylation on Tyr-19 is required for insulin-induced phosphorylation of MAPK1 and DNA binding of STAT3. Tyrosine phosphorylation is induced by both EGF and insulin (By. similarity).

It localises to the nucleus. It is found in the cytoplasm. The protein localises to the golgi apparatus membrane. Its subcellular location is the cell membrane. The protein resides in the membrane. It localises to the caveola. Its function is as follows. May act as a scaffolding protein within caveolar membranes. Interacts directly with G-protein alpha subunits and can functionally regulate their activity. Acts as an accessory protein in conjunction with CAV1 in targeting to lipid rafts and driving caveolae formation. The Ser-36 phosphorylated form has a role in modulating mitosis in endothelial cells. Positive regulator of cellular mitogenesis of the MAPK signaling pathway. Required for the insulin-stimulated nuclear translocation and activation of MAPK1 and STAT3, and the subsequent regulation of cell cycle progression. The chain is Caveolin-2 (CAV2) from Mustela putorius furo (European domestic ferret).